We begin with the raw amino-acid sequence, 963 residues long: Protocadherin alpha-C1 (963 aa).

The signal sequence occupies residues 1 to 18 (MVGWGVAVLCLWVSCGAA). Cadherin domains lie at 19–124 (AGQL…SPLF), 125–233 (PAGD…APVF), 234–340 (ERSV…APEL), 349–445 (VPED…TPSF), and 446–555 (PQPQ…YPVI). Residues 19–683 (AGQLEYSVPE…GGQLSAQNLY (665 aa)) lie on the Extracellular side of the membrane. Asn-38 carries N-linked (GlcNAc...) asparagine glycosylation. Residues Asn-248 and Asn-274 are each glycosylated (N-linked (GlcNAc...) asparagine). Asn-562 carries an N-linked (GlcNAc...) asparagine glycan. The region spanning 570–667 (VPRSARTGHL…NSVPQLLPDF (98 aa)) is the Cadherin 6 domain. Residues 684-704 (LVIALACISFLFLGCLLFFVC) traverse the membrane as a helical segment. Residues 705–963 (TKLHQSPGCC…GNSTTDNSDQ (259 aa)) are Cytoplasmic-facing. PXXP repeat units lie at residues 812–815 (PRQP), 845–848 (PGGP), 886–889 (PGNP), and 904–907 (PGSP). The interval 812-907 (PRQPNPDWRY…PDKFIIPGSP (96 aa)) is 4 X 4 AA repeats of P-X-X-P. Residues 844-902 (GPGGPDQQWPTVSSATPEPEAGEVSPPVGAGVNSNSWTFKYGPGNPKQSGPGELPDKFI) form a disordered region. Positions 914–963 (QEPANSQIDKSDFITFGKKEETKKKKKKKKGNKTQEKKEKGNSTTDNSDQ) are disordered. The segment covering 922 to 936 (DKSDFITFGKKEETK) has biased composition (basic and acidic residues).

Its subcellular location is the cell membrane. Potential calcium-dependent cell-adhesion protein. May be involved in the establishment and maintenance of specific neuronal connections in the brain. The polypeptide is Protocadherin alpha-C1 (PCDHAC1) (Pan troglodytes (Chimpanzee)).